An 851-amino-acid polypeptide reads, in one-letter code: B-box type zinc finger protein ncl-1 (851 aa).

Positions 71–91 (GFGFGSPSSTTSSSPPLSNSP) are disordered. Residues 76–91 (SPSSTTSSSPPLSNSP) are compositionally biased toward low complexity. The B box-type 1; atypical zinc finger occupies 127–174 (VPAVHCSGCKSNETATSFCQDCNANLCDNCTMAHKFMHCFADHRVVSL). Zn(2+) contacts are provided by C132, C135, C156, and H160. Residues 176-197 (TPGTGSSSSSTSSSSSASSTSS) are compositionally biased toward low complexity. The tract at residues 176–211 (TPGTGSSSSSTSSSSSASSTSSHQVPSLGGKQSPDS) is disordered. The B box-type 2 zinc finger occupies 218-261 (KRSVLCLQHRASELVFFCVSCNLAICRDCTVSDHPSGTHQYELI). Positions 223, 226, 246, and 251 each coordinate Zn(2+). The stretch at 303–331 (SLHNAHAQLEETVSNLINVIQDQKKTLAK) forms a coiled coil. NHL repeat units follow at residues 573-616 (HCKF…FDKE), 620-665 (KFQF…YNQY), 666-707 (GQFL…FDMF), 708-750 (GNIL…FSYE), and 751-794 (GQYL…FSQD).

As to expression, present in cells in which nucleoli are absent, and absent from large cells in which nucleoli are prominent. Highly expressed in the gonads.

Its subcellular location is the cytoplasm. In terms of biological role, translational repressor that inhibits protein synthesis. Represses the translation of mRNAs such as fib-1, probably by being recruited by RNA-binding protein nos-2 and the Pumilio proteins puf-5, puf-8 and puf-9 to the consensus core PUF binding motif in the 3'-UTR of fib-1 mRNA. Negatively regulates ribosomal RNA (rRNA) synthesis, ribosomal protein synthesis and nucleolus size. Its role in the negative regulation of nucleolus size is most likely through its negative regulation of the translation of proteins such as the rRNA 2'-O-methyltransferase fib-1, and dao-5. Might act directly as a transcription factor to inhibit RNA polymerase I (rRNA) and III (5S RNA) transcription. Plays a role in embryonic development, and in particular, is involved in regulating the localization of proteins, such as par-2, that are required for embryonic cell polarity. Plays a role in the regulation of lifespan, and the response to nutrient availability. This Caenorhabditis elegans protein is B-box type zinc finger protein ncl-1.